Reading from the N-terminus, the 718-residue chain is Catalase-peroxidase (718 aa).

The tract at residues 1–24 (MDQKSDNAGKCPVAHTVPKGRSNR) is disordered. Positions 95 to 217 (WHSAGTYRIT…LAAVQMGLIY (123 aa)) form a cross-link, tryptophyl-tyrosyl-methioninium (Trp-Tyr) (with M-243). Residue His96 is the Proton acceptor of the active site. Residues 217–243 (YVNPEGPNGNPDPVAAAREIRETFARM) constitute a cross-link (tryptophyl-tyrosyl-methioninium (Tyr-Met) (with W-95)). His258 is a heme b binding site.

Belongs to the peroxidase family. Peroxidase/catalase subfamily. Homodimer or homotetramer. Heme b serves as cofactor. Post-translationally, formation of the three residue Trp-Tyr-Met cross-link is important for the catalase, but not the peroxidase activity of the enzyme.

The catalysed reaction is H2O2 + AH2 = A + 2 H2O. It catalyses the reaction 2 H2O2 = O2 + 2 H2O. Bifunctional enzyme with both catalase and broad-spectrum peroxidase activity. The polypeptide is Catalase-peroxidase (Sinorhizobium fredii (strain NBRC 101917 / NGR234)).